Reading from the N-terminus, the 287-residue chain is Taxis protein CheF2 (287 aa).

In terms of assembly, interacts with chemotaxis (Che) proteins as well as flagella accessory (Fla) proteins.

Involved in taxis signal transduction. This chain is Taxis protein CheF2 (cheF2), found in Halobacterium salinarum (strain ATCC 29341 / DSM 671 / R1).